The primary structure comprises 285 residues: NAD kinase (285 aa).

The Proton acceptor role is filled by aspartate 68. NAD(+) is bound by residues aspartate 68–glycine 69, asparagine 142–aspartate 143, arginine 153, arginine 170, aspartate 172, and glutamine 242.

Belongs to the NAD kinase family. It depends on a divalent metal cation as a cofactor.

Its subcellular location is the cytoplasm. It catalyses the reaction NAD(+) + ATP = ADP + NADP(+) + H(+). Its function is as follows. Involved in the regulation of the intracellular balance of NAD and NADP, and is a key enzyme in the biosynthesis of NADP. Catalyzes specifically the phosphorylation on 2'-hydroxyl of the adenosine moiety of NAD to yield NADP. The chain is NAD kinase from Acidobacterium capsulatum (strain ATCC 51196 / DSM 11244 / BCRC 80197 / JCM 7670 / NBRC 15755 / NCIMB 13165 / 161).